We begin with the raw amino-acid sequence, 549 residues long: Speedy protein E3 (549 aa).

A compositionally biased stretch (low complexity) spans 1–15; that stretch reads MTSHQPQPQEEQSPQ. Disordered regions lie at residues 1-74, 126-145, 188-218, 261-291, and 334-364; these read MTSH…EPEE, KREC…APEP, and SPPR…APEP. Composition is skewed to acidic residues over residues 58–74, 131–145, 204–218, 277–291, and 350–364; these read DESD…EPEE and DESD…APEP.

It belongs to the Speedy/Ringo family. In terms of tissue distribution, predominantly expressed in testis and spleen.

In Homo sapiens (Human), this protein is Speedy protein E3.